Consider the following 163-residue polypeptide: Putative C-type lectin protein FPV239 (163 aa).

Residues 48-159 enclose the C-type lectin domain; the sequence is CKEGWVGYNK…CFLPKKWICR (112 aa). Cystine bridges form between Cys-76–Cys-158 and Cys-137–Cys-150.

This chain is Putative C-type lectin protein FPV239, found in Fowlpox virus (strain NVSL) (FPV).